The following is an 801-amino-acid chain: Na(+)/H(+) antiporter subunit A1 (801 aa).

21 helical membrane passes run 4 to 25, 30 to 49, 79 to 101, 108 to 127, 131 to 153, 166 to 188, 208 to 230, 243 to 265, 270 to 289, 302 to 324, 339 to 361, 373 to 395, 429 to 451, 472 to 494, 526 to 548, 589 to 611, 621 to 641, 646 to 668, 672 to 694, 707 to 729, and 767 to 784; these read LHIAVILPLIFALIIPILYRFF, LGWFVLPVPIVIFIYMLTLI, LGLLFSLLISGIGSLVVLYSIGY, LGNFYCYLLLFMGAMLGVVL, VIILYLFWELTSFSSFLLISFWR, LIITVFGGLSLLGGIILLAIPTQ, FIFAMILIMIGAFTKSAQFPFYI, SAYLHSATMVKAGLYLIARMTPI, QGWVWTVTLVGLITLFWASL, AFSTVSQLGMIMAMLGIGAISYH, AAIFHLINHATFKGALFMITGAV, LGGLLTIMPISFTITVITALSMA, YLFPIIGIVGSVFTFVYSIKFIM, ILMLLSPAILATLVIVFGLFPGI, AFLSTLVIYILGILLIVTFSYWV, NNLVIIFGALILLTFVTIFSVPF, IRIFEVCIVILLLSAAFLILF, LFSIIMLSAVGYAVSVLFIFFKA, ALTQFVVESISTALFLLCFYHLP, LTNALIAGGVGLSVIIIGLIAYG, and LFESSVLGIAGLAVYTMI.

The protein belongs to the CPA3 antiporters (TC 2.A.63) subunit A family. As to quaternary structure, may form a heterooligomeric complex that consists of seven subunits: mnhA1, mnhB1, mnhC1, mnhD1, mnhE1, mnhF1 and mnhG1.

It is found in the cell membrane. With respect to regulation, na(+) extrusion is completely inhibited by the H(+) conductor carbonyl cyanide m-chlorophenylhydrazone (CCCP). Its function is as follows. Mnh complex is a Na(+)/H(+) antiporter involved in Na(+) excretion. The protein is Na(+)/H(+) antiporter subunit A1 (mnhA1) of Staphylococcus aureus (strain MSSA476).